The chain runs to 151 residues: D-aminoacyl-tRNA deacylase (151 aa).

Positions 138–139 match the Gly-cisPro motif, important for rejection of L-amino acids motif; sequence GP.

This sequence belongs to the DTD family. As to quaternary structure, homodimer.

Its subcellular location is the cytoplasm. The enzyme catalyses glycyl-tRNA(Ala) + H2O = tRNA(Ala) + glycine + H(+). It carries out the reaction a D-aminoacyl-tRNA + H2O = a tRNA + a D-alpha-amino acid + H(+). In terms of biological role, an aminoacyl-tRNA editing enzyme that deacylates mischarged D-aminoacyl-tRNAs. Also deacylates mischarged glycyl-tRNA(Ala), protecting cells against glycine mischarging by AlaRS. Acts via tRNA-based rather than protein-based catalysis; rejects L-amino acids rather than detecting D-amino acids in the active site. By recycling D-aminoacyl-tRNA to D-amino acids and free tRNA molecules, this enzyme counteracts the toxicity associated with the formation of D-aminoacyl-tRNA entities in vivo and helps enforce protein L-homochirality. This Magnetococcus marinus (strain ATCC BAA-1437 / JCM 17883 / MC-1) protein is D-aminoacyl-tRNA deacylase.